We begin with the raw amino-acid sequence, 521 residues long: MIDEILPKLVQYWYIVLPTLLIIKHVVSYINTQRLMRKFRAKPVTNVLNDGFFGIPNGIKAIKEKNKGRAQEYNDEKFAAGPKPKVGTYLFKLFTKDVLVTKDPENIKAILATQFEDFSLGKRLDFFKPLLGYGIFTLDGEGWKHSRAMLRPQFAREQVGHVKLIEPHFQSLKKHIIKNKGQFFDIQELFFRFTVDSATEFLFGESVESLKDESIGYDQQDFDFDGRKNFAEAFNKAQEYLGTRAILQLFYWLVNGADFKKSVAEVHKFTDYYVQKALDATPEELEKHSGYIFLYELVQQTRDPKVLRDQSLNILLAGRDTTAGLLSFALFELARNPEVWSRLREEIGDKFGLDEDATIEGISFESLKQCEYLKAVVNECLRMYPSVPRNFRIATKHTTLPRGGGPDGKDPIFIKKGAVVSYGINSTHLDPMYYGPDARLFNPDRWSKPETKKLGWAFLPFNGGPRICLGQQFALTEASYVLVRMIQNFKELELTPNTVYPPRRLTNLTMSLYDGAYIKVN.

Residue Cys-468 coordinates heme.

The protein belongs to the cytochrome P450 family. It depends on heme as a cofactor.

The protein localises to the membrane. In terms of biological role, together with an NADPH cytochrome P450 the enzyme system catalyzes the terminal hydroxylation as the first step in the assimilation of alkanes and fatty acids. This chain is Cytochrome P450 52A9 (CYP52A9), found in Candida maltosa (Yeast).